We begin with the raw amino-acid sequence, 232 residues long: Small ribosomal subunit protein uS3 (232 aa).

Positions 39–107 (VRQFLTKELA…PAQINIAEVR (69 aa)) constitute a KH type-2 domain.

It belongs to the universal ribosomal protein uS3 family. Part of the 30S ribosomal subunit. Forms a tight complex with proteins S10 and S14.

Its function is as follows. Binds the lower part of the 30S subunit head. Binds mRNA in the 70S ribosome, positioning it for translation. This chain is Small ribosomal subunit protein uS3, found in Yersinia pestis bv. Antiqua (strain Antiqua).